Consider the following 309-residue polypeptide: Homoserine O-succinyltransferase (309 aa).

Cys142 acts as the Acyl-thioester intermediate in catalysis. Lys163 and Ser192 together coordinate substrate. The active-site Proton acceptor is His235. The active site involves Glu237. Arg249 is a binding site for substrate.

It belongs to the MetA family.

The protein localises to the cytoplasm. It catalyses the reaction L-homoserine + succinyl-CoA = O-succinyl-L-homoserine + CoA. It participates in amino-acid biosynthesis; L-methionine biosynthesis via de novo pathway; O-succinyl-L-homoserine from L-homoserine: step 1/1. Transfers a succinyl group from succinyl-CoA to L-homoserine, forming succinyl-L-homoserine. The polypeptide is Homoserine O-succinyltransferase (Yersinia pseudotuberculosis serotype O:1b (strain IP 31758)).